The primary structure comprises 404 residues: Ubiquitin-like modifier-activating enzyme 5 (404 aa).

Positions 83, 104, 127, 150, and 184 each coordinate ATP. Residues Cys226 and Cys229 each coordinate Zn(2+). The active-site Glycyl thioester intermediate is the Cys250. Residues Cys303 and Cys308 each contribute to the Zn(2+) site. Positions 372 to 393 (APEKSSETSEETVTAATADETS) are disordered. Positions 382–391 (ETVTAATADE) are enriched in low complexity.

This sequence belongs to the ubiquitin-activating E1 family. UBA5 subfamily.

Its function is as follows. E1-like enzyme which activates UFM1. The chain is Ubiquitin-like modifier-activating enzyme 5 from Drosophila simulans (Fruit fly).